Reading from the N-terminus, the 403-residue chain is Imidazolonepropionase (403 aa).

Residues His-69 and His-71 each contribute to the Fe(3+) site. 2 residues coordinate Zn(2+): His-69 and His-71. Positions 78, 141, and 174 each coordinate 4-imidazolone-5-propanoate. Residue Tyr-141 coordinates N-formimidoyl-L-glutamate. His-239 contributes to the Fe(3+) binding site. His-239 is a binding site for Zn(2+). Gln-242 provides a ligand contact to 4-imidazolone-5-propanoate. Asp-314 serves as a coordination point for Fe(3+). Residue Asp-314 participates in Zn(2+) binding. Asn-316 and Gly-318 together coordinate N-formimidoyl-L-glutamate. Ser-319 provides a ligand contact to 4-imidazolone-5-propanoate.

This sequence belongs to the metallo-dependent hydrolases superfamily. HutI family. The cofactor is Zn(2+). Fe(3+) is required as a cofactor.

Its subcellular location is the cytoplasm. The catalysed reaction is 4-imidazolone-5-propanoate + H2O = N-formimidoyl-L-glutamate. The protein operates within amino-acid degradation; L-histidine degradation into L-glutamate; N-formimidoyl-L-glutamate from L-histidine: step 3/3. Catalyzes the hydrolytic cleavage of the carbon-nitrogen bond in imidazolone-5-propanoate to yield N-formimidoyl-L-glutamate. It is the third step in the universal histidine degradation pathway. In Legionella pneumophila (strain Paris), this protein is Imidazolonepropionase.